Reading from the N-terminus, the 629-residue chain is tRNA uridine 5-carboxymethylaminomethyl modification enzyme MnmG (629 aa).

13–18 (GGGHAG) contacts FAD. 273-287 (GPRYCPSIEDKINRF) is an NAD(+) binding site.

This sequence belongs to the MnmG family. As to quaternary structure, homodimer. Heterotetramer of two MnmE and two MnmG subunits. The cofactor is FAD.

It localises to the cytoplasm. Functionally, NAD-binding protein involved in the addition of a carboxymethylaminomethyl (cmnm) group at the wobble position (U34) of certain tRNAs, forming tRNA-cmnm(5)s(2)U34. The polypeptide is tRNA uridine 5-carboxymethylaminomethyl modification enzyme MnmG (Shewanella piezotolerans (strain WP3 / JCM 13877)).